The following is a 1141-amino-acid chain: Serine-aspartate repeat-containing protein E (1141 aa).

Positions 1–52 (MINRDNKKAITKKGMISNRLNKFSIRKYTVGTASILVGTTLIFGLGNQEAKA) are cleaved as a signal peptide. Positions 23–34 (FSIRKYTVGTAS) match the YSIRK-G/S signaling motif motif. The tract at residues 53–601 (AENTSTENAK…GDGTVKPEEK (549 aa)) is ligand binding A region. Positions 54-225 (ENTSTENAKQ…SKEELKNNPE (172 aa)) are disordered. Residues 61–75 (AKQDDATTSDNKEVV) show a composition bias toward basic and acidic residues. Positions 77–90 (EAENNSTTENDSTN) are enriched in low complexity. Positions 92 to 109 (IKKETNTDSQPEAKEEST) are enriched in basic and acidic residues. Positions 110-126 (KSSTQQQQNNVTATTET) are enriched in low complexity. The segment covering 130–145 (NIEKENVKPSTDKTAT) has biased composition (basic and acidic residues). Positions 158–207 (PNNTNNDVTTKPSTSEIQTKPTTPQESTNIENSQPQPTPSKVDNQVTDAT) are enriched in polar residues. Residues 216 to 225 (SKEELKNNPE) are compositionally biased toward basic and acidic residues. CNA-B domains follow at residues 602-714 (LYKI…YKEP), 715-824 (KYNL…YKTP), and 825-935 (KYSL…EEDT). The tract at residues 899-1117 (VTNTTEDDKD…GSENNGSNNA (219 aa)) is disordered. 2 stretches are compositionally biased toward acidic residues: residues 903-913 (TEDDKDADGGE) and 930-1080 (YFEE…DSDS). Positions 1104 to 1108 (LPETG) match the LPXTG sorting signal motif. T1107 bears the Pentaglycyl murein peptidoglycan amidated threonine mark. Residues 1108–1141 (GSENNGSNNATLFGGLFAALGSLLLFGRRKKQNK) constitute a propeptide, removed by sortase.

This sequence belongs to the serine-aspartate repeat-containing protein (SDr) family. Interacts with host complement factor H/CFAH (via C-terminus). Interacts with host complement regulator C4BPA.

It is found in the secreted. The protein resides in the cell wall. Cell surface-associated calcium-binding protein which plays an important role in adhesion and pathogenesis. Contributes to the resistance to killing by innate immune components in blood and thus attenuates bacterial clearance by interacting with host complement factor H/CFAH and modulating its activity. Also inhibits bacterial opsonization and killing by interacting with host complement regulator C4BPA and thus inhibiting classical complement pathway activation. This is Serine-aspartate repeat-containing protein E (sdrE) from Staphylococcus aureus (strain MSSA476).